The chain runs to 207 residues: Inhibitor of hydrogen peroxide resistance (207 aa).

Positions 163–182 form a DNA-binding region, H-T-H motif; it reads MNYIHQRTRISRSVVAEVLA.

It belongs to the IprA family.

Its function is as follows. Involved in oxidative stress resistance. In Escherichia coli O157:H7, this protein is Inhibitor of hydrogen peroxide resistance.